The chain runs to 293 residues: Cell division protein FtsQ (293 aa).

Over M1–R27 the chain is Cytoplasmic. A helical transmembrane segment spans residues L28–F48. Residues G49 to Q293 are Periplasmic-facing. Residues F81 to R149 enclose the POTRA domain.

This sequence belongs to the FtsQ/DivIB family. FtsQ subfamily.

It localises to the cell inner membrane. Functionally, essential cell division protein. The protein is Cell division protein FtsQ of Roseobacter litoralis (strain ATCC 49566 / DSM 6996 / JCM 21268 / NBRC 15278 / OCh 149).